Consider the following 1032-residue polypeptide: MAEARRFSPVHELDVGQILSEARHRWLRPPEICEILQNYQRFQISTEPPTTPSSGSVFMFDRKVLRYFRKDGHNWRKKKDGKTVKEAHERLKAGSVDVLHCYYAHGQDNENFQRRSYWLLQEELSHIVFVHYLEVKGSRVSTSFNRMQRTEDAARSPQETGDALTSEHDGYASCSFNQNDHSNHSQTTDSASVNGFHSPELEDAESAYNQHGSSTAYSHQELQQPATGGNLTGFDPYYQISLTPRDSYQKELRTIPVTDSSIMVDKSKTINSPGVTNGLKNRKSIDSQTWEEILGNCGSGVEALPLQPNSEHEVLDQILESSFTMQDFASLQESMVKSQNQELNSGLTSDRTVWFQGQDMELNAISNLASNEKAPYLSTMKQHLLHGALGEEGLKKMDSFNRWMSKELGDVGVIADANESFTQSSSRTYWEEVESEDGSNGHNSRRDMDGYVMSPSLSKEQLFSINDFSPSWAYVGCEVVVFVTGKFLKTREETEIGEWSCMFGQTEVPADVISNGILQCVAPMHEAGRVPFYVTCSNRLACSEVREFEYKVAESQVFDREADDESTIDILEARFVKLLCSKSENTSPVSGNDSDLSQLSEKISLLLFENDDQLDQMLMNEISQENMKNNLLQEFLKESLHSWLLQKIAEGGKGPSVLDEGGQGVLHFAASLGYNWALEPTIIAGVSVDFRDVNGWTALHWAAFFGRERIIGSLIALGAAPGTLTDPNPDFPSGSTPSDLAYANGHKGIAGYLSEYALRAHVSLLSLNDKNAETVEMAPSPSSSSLTDSLTAVRNATQAAARIHQVFRAQSFQKKQLKEFGDKKLGMSEERALSMLAPKTHKSGRAHSDDSVQAAAIRIQNKFRGYKGRKDYLITRQRIIKIQAHVRGYQFRKNYRKIIWSVGVLEKVILRWRRKGAGLRGFKSEALVEKMQDGTEKEEDDDFFKQGRKQTEDRLQKALARVKSMVQYPEARDQYRRLLNVVNDIQESKVEKALENSEATCFDDDDDLIDIEALLEDDDTLMLPMSSSLWTS.

The CG-1 DNA-binding region spans 15–141 (VGQILSEARH…YLEVKGSRVS (127 aa)). A disordered region spans residues 146–197 (RMQRTEDAARSPQETGDALTSEHDGYASCSFNQNDHSNHSQTTDSASVNGFH). Residues 174 to 195 (CSFNQNDHSNHSQTTDSASVNG) show a composition bias toward polar residues. Ser-272 bears the Phosphoserine mark. 3 ANK repeats span residues 661–690 (GGQGVLHFAASLGYNWALEPTIIAGVSVDF), 694–723 (NGWTALHWAAFFGRERIIGSLIALGAAPGT), and 733–762 (SGSTPSDLAYANGHKGIAGYLSEYALRAHV). IQ domains lie at 852–881 (VQAAAIRIQNKFRGYKGRKDYLITRQRIIK) and 875–904 (TRQRIIKIQAHVRGYQFRKNYRKIIWSVGV). The calmodulin-binding stretch occupies residues 900-922 (WSVGVLEKVILRWRRKGAGLRGF). A coiled-coil region spans residues 945-987 (KQGRKQTEDRLQKALARVKSMVQYPEARDQYRRLLNVVNDIQE). The residue at position 964 (Ser-964) is a Phosphoserine.

It belongs to the CAMTA family. As to quaternary structure, interacts with SR1IP1. Interacts with DSC1. Post-translationally, ubiquinated during pathogen infection. Ubiquitination leads to its subsequent proteasome-dependent degradation, thus allowing the establishment of plant defense response. As to expression, expressed in roots, stems, leaves, carpels, and siliques, but not in stigmas or other parts of the flower.

The protein localises to the nucleus. Its function is as follows. Transcription activator that binds to the DNA consensus sequence 5'-[ACG]CGCG[GTC]-3'. Binds calmodulin in a calcium-dependent manner in vitro. Regulates transcriptional activity in response to calcium signals. Involved in freezing tolerance in association with CAMTA1 and CAMTA2. Required for the cold-induced expression of DREB1B/CBF1, DREB1C/CBF2, ZAT12 and GOLS3. Involved in response to cold. Contributes together with CAMTA5 to the positive regulation of the cold-induced expression of DREB1A/CBF3, DREB1B/CBF1 and DREB1C/CBF2. Involved together with CAMTA2 and CAMTA4 in the positive regulation of a general stress response (GSR). Involved in the regulation of GSR amplitude downstream of MEKK1. Involved in the regulation of a set of genes involved in defense responses against pathogens. Involved in the regulation of both basal resistance and systemic acquired resistance (SAR). Acts as negative regulator of plant immunity. Binds to the promoter of the defense-related gene EDS1 and represses its expression. Binds to the promoter of the defense-related gene NDR1 and represses its expression. Involved in defense against insects. Required for tolerance to the generalist herbivore Trichoplusia ni, and contributes to the positive regulation of genes associated with glucosinolate metabolism. Required for tolerance to Bradysia impatiens larvae. Mediates herbivore-induced wound response. Required for wound-induced jasmonate accumulation. Involved in the regulation of ethylene-induced senescence by binding to the promoter of the senescence-inducer gene EIN3 and repressing its expression. This is Calmodulin-binding transcription activator 3 from Arabidopsis thaliana (Mouse-ear cress).